The primary structure comprises 167 residues: Periplasmic nitrate reductase, electron transfer subunit (167 aa).

The signal sequence occupies residues 1–34 (MRRAHRAGERVMMKRFGIALLAVAIAAGASSLTA). The tract at residues 40–65 (GLHGPAPLNDEGPAPPMLPNRNTSER) is disordered. The heme c site is built by His-79, Cys-93, Cys-96, His-97, His-114, Cys-133, Cys-136, and His-137.

Belongs to the NapB family. Component of the periplasmic nitrate reductase NapAB complex composed of NapA and NapB. Post-translationally, binds 2 heme C groups per subunit.

The protein localises to the periplasm. Its function is as follows. Electron transfer subunit of the periplasmic nitrate reductase complex NapAB. Receives electrons from the membrane-anchored tetraheme c-type NapC protein and transfers these to NapA subunit, thus allowing electron flow between membrane and periplasm. Essential for periplasmic nitrate reduction with nitrate as the terminal electron acceptor. This is Periplasmic nitrate reductase, electron transfer subunit from Bradyrhizobium japonicum.